We begin with the raw amino-acid sequence, 1216 residues long: ATP-dependent helicase/nuclease subunit A (1216 aa).

Residues 26–488 (QKKTAEQIEA…ILLKANFRSS (463 aa)) form the UvrD-like helicase ATP-binding domain. An ATP-binding site is contributed by 47 to 54 (ASAGSGKT). The UvrD-like helicase C-terminal domain maps to 515–802 (KHQLVFANTK…ELMTIHKSKG (288 aa)).

It belongs to the helicase family. AddA subfamily. In terms of assembly, heterodimer of AddA and AddB/RexB. It depends on Mg(2+) as a cofactor.

The enzyme catalyses Couples ATP hydrolysis with the unwinding of duplex DNA by translocating in the 3'-5' direction.. It catalyses the reaction ATP + H2O = ADP + phosphate + H(+). The heterodimer acts as both an ATP-dependent DNA helicase and an ATP-dependent, dual-direction single-stranded exonuclease. Recognizes the chi site generating a DNA molecule suitable for the initiation of homologous recombination. The AddA nuclease domain is required for chi fragment generation; this subunit has the helicase and 3' -&gt; 5' nuclease activities. The protein is ATP-dependent helicase/nuclease subunit A of Streptococcus pneumoniae (strain ATCC 700669 / Spain 23F-1).